The primary structure comprises 260 residues: Ribosome maturation factor RimP (260 aa).

Basic and acidic residues-rich tracts occupy residues 189–199 (RRGRDAEREQL) and 215–227 (AREMRDKAGPRKE). Residues 189 to 260 (RRGRDAEREQ…QTTSDPHQGE (72 aa)) are disordered. Basic residues predominate over residues 228–242 (KTAKKPLPKNTKAHR).

The protein belongs to the RimP family.

The protein resides in the cytoplasm. In terms of biological role, required for maturation of 30S ribosomal subunits. This Afipia carboxidovorans (strain ATCC 49405 / DSM 1227 / KCTC 32145 / OM5) (Oligotropha carboxidovorans) protein is Ribosome maturation factor RimP.